Consider the following 475-residue polypeptide: Ribulose bisphosphate carboxylase large chain (475 aa).

Residues 1–2 (MS) constitute a propeptide that is removed on maturation. The residue at position 3 (proline 3) is an N-acetylproline. At lysine 14 the chain carries N6,N6,N6-trimethyllysine. Substrate is bound by residues asparagine 123 and threonine 173. The Proton acceptor role is filled by lysine 175. Lysine 177 provides a ligand contact to substrate. Mg(2+) is bound by residues lysine 201, aspartate 203, and glutamate 204. Residue lysine 201 is modified to N6-carboxylysine. The active-site Proton acceptor is histidine 294. Residues arginine 295, histidine 327, and serine 379 each contribute to the substrate site.

This sequence belongs to the RuBisCO large chain family. Type I subfamily. Heterohexadecamer of 8 large chains and 8 small chains; disulfide-linked. The disulfide link is formed within the large subunit homodimers. It depends on Mg(2+) as a cofactor. The disulfide bond which can form in the large chain dimeric partners within the hexadecamer appears to be associated with oxidative stress and protein turnover.

It localises to the plastid. The protein localises to the chloroplast. The enzyme catalyses 2 (2R)-3-phosphoglycerate + 2 H(+) = D-ribulose 1,5-bisphosphate + CO2 + H2O. The catalysed reaction is D-ribulose 1,5-bisphosphate + O2 = 2-phosphoglycolate + (2R)-3-phosphoglycerate + 2 H(+). RuBisCO catalyzes two reactions: the carboxylation of D-ribulose 1,5-bisphosphate, the primary event in carbon dioxide fixation, as well as the oxidative fragmentation of the pentose substrate in the photorespiration process. Both reactions occur simultaneously and in competition at the same active site. The protein is Ribulose bisphosphate carboxylase large chain of Larix occidentalis (Western larch).